Reading from the N-terminus, the 458-residue chain is Methylenetetrahydrofolate--tRNA-(uracil-5-)-methyltransferase TrmFO (458 aa).

12-17 (GAGLAG) serves as a coordination point for FAD.

This sequence belongs to the MnmG family. TrmFO subfamily. It depends on FAD as a cofactor.

Its subcellular location is the cytoplasm. The catalysed reaction is uridine(54) in tRNA + (6R)-5,10-methylene-5,6,7,8-tetrahydrofolate + NADH + H(+) = 5-methyluridine(54) in tRNA + (6S)-5,6,7,8-tetrahydrofolate + NAD(+). It carries out the reaction uridine(54) in tRNA + (6R)-5,10-methylene-5,6,7,8-tetrahydrofolate + NADPH + H(+) = 5-methyluridine(54) in tRNA + (6S)-5,6,7,8-tetrahydrofolate + NADP(+). Catalyzes the folate-dependent formation of 5-methyl-uridine at position 54 (M-5-U54) in all tRNAs. This chain is Methylenetetrahydrofolate--tRNA-(uracil-5-)-methyltransferase TrmFO, found in Deinococcus geothermalis (strain DSM 11300 / CIP 105573 / AG-3a).